Here is a 796-residue protein sequence, read N- to C-terminus: Probable phosphoketolase (796 aa).

The protein belongs to the XFP family. The cofactor is thiamine diphosphate.

This is Probable phosphoketolase from Synechococcus elongatus (strain ATCC 33912 / PCC 7942 / FACHB-805) (Anacystis nidulans R2).